Consider the following 373-residue polypeptide: Anhydro-N-acetylmuramic acid kinase (373 aa).

Gly-12 to Asp-19 is an ATP binding site.

Belongs to the anhydro-N-acetylmuramic acid kinase family.

It carries out the reaction 1,6-anhydro-N-acetyl-beta-muramate + ATP + H2O = N-acetyl-D-muramate 6-phosphate + ADP + H(+). It functions in the pathway amino-sugar metabolism; 1,6-anhydro-N-acetylmuramate degradation. It participates in cell wall biogenesis; peptidoglycan recycling. Its function is as follows. Catalyzes the specific phosphorylation of 1,6-anhydro-N-acetylmuramic acid (anhMurNAc) with the simultaneous cleavage of the 1,6-anhydro ring, generating MurNAc-6-P. Is required for the utilization of anhMurNAc either imported from the medium or derived from its own cell wall murein, and thus plays a role in cell wall recycling. This chain is Anhydro-N-acetylmuramic acid kinase, found in Salmonella newport (strain SL254).